The sequence spans 449 residues: Probable pectate lyase P59 (449 aa).

The first 22 residues, 1–22 (MGGPKIKYSFLFLCITFATIIP), serve as a signal peptide directing secretion. N-linked (GlcNAc...) asparagine glycans are attached at residues Asn56, Asn80, and Asn81. Residues Asp245, Asp269, and Asp273 each coordinate Ca(2+). The active site involves Arg325.

Belongs to the polysaccharide lyase 1 family. It depends on Ca(2+) as a cofactor. Expressed in anthers and pollen.

The catalysed reaction is Eliminative cleavage of (1-&gt;4)-alpha-D-galacturonan to give oligosaccharides with 4-deoxy-alpha-D-galact-4-enuronosyl groups at their non-reducing ends.. It participates in glycan metabolism; pectin degradation; 2-dehydro-3-deoxy-D-gluconate from pectin: step 2/5. Functionally, might be needed during pollen development and tube growth. This is Probable pectate lyase P59 (LAT59) from Solanum lycopersicum (Tomato).